The primary structure comprises 146 residues: Large ribosomal subunit protein uL15 (146 aa).

Over residues 1 to 13 (MKLHELKAAEGSR) the composition is skewed to basic and acidic residues. The interval 1 to 61 (MKLHELKAAE…GGQTPLFRRM (61 aa)) is disordered. Composition is skewed to gly residues over residues 23–35 (TSSG…GRGQ) and 42–52 (SGGGVRLGFEG).

The protein belongs to the universal ribosomal protein uL15 family. In terms of assembly, part of the 50S ribosomal subunit.

Binds to the 23S rRNA. The polypeptide is Large ribosomal subunit protein uL15 (Streptococcus uberis (strain ATCC BAA-854 / 0140J)).